Reading from the N-terminus, the 936-residue chain is Protocadherin gamma-A10 (936 aa).

Residues 1-32 (MAAQRNRSKESKDCSGLVLLCLFFGIPWEAGA) form the signal peptide. 6 consecutive Cadherin domains span residues 33 to 137 (RQIS…APTF), 138 to 246 (QAEN…APVF), 247 to 351 (TLPE…SPEL), 352 to 456 (TITS…PPTF), 457 to 566 (SQVS…APEI), and 574 to 687 (DGST…SPAN). Residues 33-696 (RQISYSIPEE…NSETSDLTLY (664 aa)) lie on the Extracellular side of the membrane. The N-linked (GlcNAc...) asparagine glycan is linked to N51. Residues N423 and N549 are each glycosylated (N-linked (GlcNAc...) asparagine). The chain crosses the membrane as a helical span at residues 697-717 (LVVAVAAVSCVFLAFVIVLLA). Topologically, residues 718–936 (LRLRRWHKSR…KKKSGKKEKK (219 aa)) are cytoplasmic. 2 disordered regions span residues 801-845 (SKFP…WPNN) and 906-936 (ATLTNAAGKRDGKAPAGGNGNKKKSGKKEKK). The span at 820–845 (WRFSQAQRPGTSGSQNGDDTGTWPNN) shows a compositional bias: polar residues. Over residues 926 to 936 (NKKKSGKKEKK) the composition is skewed to basic residues.

The protein resides in the cell membrane. In terms of biological role, potential calcium-dependent cell-adhesion protein. May be involved in the establishment and maintenance of specific neuronal connections in the brain. This Pan troglodytes (Chimpanzee) protein is Protocadherin gamma-A10 (PCDHGA10).